The primary structure comprises 648 residues: MRIAKILLPVSKLFPLDYLITEDLELNIGDLVVVHFRNQELTGIVWELATNSEAKKIKTIKAKVPLNLNISLEVLALIKWMSSYYMSELGSIAKLVLPINIAEKPIKIKEQQVKNYFVLPQLSEEQKQAVTIFNESNKPTLIKGVTGSGKTEIYFHIIADHLMKGQQVLIMLPEIALSRQIINRFIDRFGFEPIIWNSSVTKAQKKMILRGILSDKVKVVIGARSSLFLPFHNLGLIVIDEEHDDSYKQDDNILYNARDTAIVRGVFDKAKIVLCSATPSLETIYNIKTHKYQLVTLVNRYKNIDLPNIEIIDMTKEKLPKNSYLSKILIDAIKGNLENKKQVLLFLNRRGYAPLMLCKACGHRFTCRFCSAWMVLHKATKTLECHHCGYQSKIFSSCPECLEDETLTICGPGIERIEEEAMLLFPKSKIAVISKDHAKTPAKIAQLLHQMENLEIDILIGTQIITKGYHFPNLTLVGVIDADLGSNNAELRASERTFQLLHQVGGRAGRGDSKGVVYLQSYYPDNIIFSYVKVGDEDSFFTNELEIRKAANMPPFSKTASLILSGFSESKILDIAKNIVQIAPKANVKILGPARALMSKLAGKYRYRILIIADKKFNLQQYLKFWLSLIKIPSYCQIKIDIDPKTFY.

Positions 131 to 297 (TIFNESNKPT…KTHKYQLVTL (167 aa)) constitute a Helicase ATP-binding domain. 144–151 (GVTGSGKT) contacts ATP. Positions 240-243 (DEEH) match the DEAH box motif. Zn(2+) contacts are provided by C358, C361, C367, C370, C385, C388, C398, and C401. Positions 393–548 (KIFSSCPECL…SFFTNELEIR (156 aa)) constitute a Helicase C-terminal domain.

It belongs to the helicase family. PriA subfamily. Component of the replication restart primosome. Zn(2+) serves as cofactor.

It carries out the reaction Couples ATP hydrolysis with the unwinding of duplex DNA by translocating in the 3'-5' direction.. The catalysed reaction is ATP + H2O = ADP + phosphate + H(+). Initiates the restart of stalled replication forks, which reloads the replicative helicase on sites other than the origin of replication. Recognizes and binds to abandoned replication forks and remodels them to uncover a helicase loading site. Promotes assembly of the primosome at these replication forks. The chain is Replication restart protein PriA from Rickettsia typhi (strain ATCC VR-144 / Wilmington).